Here is a 720-residue protein sequence, read N- to C-terminus: Probable GTPase-activating protein GYL1 (720 aa).

Methionine 1 carries the post-translational modification N-acetylmethionine. Over residues 1-52 the composition is skewed to basic and acidic residues; it reads MNSNEDIHEERIEVPRTPHQTQPEKDSDRIALRDEISVPEGDEKAYSDEKVE. Residues 1–132 are disordered; that stretch reads MNSNEDIHEE…TSPPLPPRAD (132 aa). Position 17 is a phosphothreonine (threonine 17). A Phosphoserine modification is found at serine 37. A compositionally biased stretch (polar residues) spans 54–66; it reads ATTNASSNFGSNE. Position 73 is a phosphoserine (serine 73). A compositionally biased stretch (polar residues) spans 95 to 108; the sequence is SKTILPSDDLSQQL. Basic and acidic residues predominate over residues 111–120; sequence EESKVEEALK. Serine 139 carries the phosphoserine modification. Disordered regions lie at residues 144–164 and 179–210; these read SLPP…RPQL and APHG…PRRI. The span at 184 to 196 shows a compositional bias: polar residues; that stretch reads ATPSKSPTSAVGN. The Rab-GAP TBC domain occupies 297-477; it reads GIPAAYRLVV…RIGDMVFLEG (181 aa). A Glycyl lysine isopeptide (Lys-Gly) (interchain with G-Cter in SUMO) cross-link involves residue lysine 498. Residues 572 to 696 adopt a coiled-coil conformation; the sequence is QYKSITEKNL…EIKTANKNGT (125 aa).

It belongs to the GYP5 family. Interacts with GYP5 and RVS167. Is part of SEC4-containing complexes.

It is found in the cytoplasm. Its subcellular location is the bud. The protein localises to the bud neck. In terms of biological role, probable GTPase-activating protein which stimulates the GTP hydrolysis rate by GYP5 of YPT1 and SEC4. Involved in ER to Golgi trafficking and polarized exocytosis. This chain is Probable GTPase-activating protein GYL1 (GYL1), found in Saccharomyces cerevisiae (strain ATCC 204508 / S288c) (Baker's yeast).